The following is a 730-amino-acid chain: Matrix metalloproteinase-9 (730 aa).

Residues 1-19 (MSPWQPLLLALLAFGCSSA) form the signal peptide. Residues 20 to 107 (APYQRQPTFV…PRCGVPDVGR (88 aa)) constitute a propeptide, activation peptide. N-linked (GlcNAc...) asparagine glycosylation is present at N39. Residues 98–105 (PRCGVPDV) carry the Cysteine switch motif. C100 lines the Zn(2+) pocket. N-linked (GlcNAc...) asparagine glycosylation is found at N120 and N127. The Ca(2+) site is built by D131 and D165. Zn(2+) is bound by residues H175 and D177. Positions 182, 183, 185, and 187 each coordinate Ca(2+). H190 contacts Zn(2+). 3 residues coordinate Ca(2+): G197, Q199, and D201. H203 is a Zn(2+) binding site. Ca(2+)-binding residues include D205, D206, and E208. 3 consecutive Fibronectin type-II domains span residues 225-273 (SNGA…FCPS), 283-331 (GEGK…FCPT), and 342-390 (SAGE…FCPD). Intrachain disulfides connect C230/C256, C244/C271, C288/C314, C302/C329, C347/C373, and C361/C388. Zn(2+) is bound at residue H401. E402 is a catalytic residue. The Zn(2+) site is built by H405 and H411. The segment at 442-529 (LYGRGSKPDP…SEASTESLSP (88 aa)) is disordered. Pro residues predominate over residues 463–477 (PTAPPTMCPTIPPTA). Residues 478–489 (YPTVGPTVGPTG) are compositionally biased toward low complexity. Pro residues predominate over residues 490 to 514 (APSPGPTSSPSPGPTGAPSPGPTAP). C534 and C729 form a disulfide bridge. 4 Hemopexin repeats span residues 536-581 (VDVF…WPAL), 582-626 (PATL…GLGP), 628-675 (VTHV…FSGV), and 676-729 (PWNS…LLQC).

Belongs to the peptidase M10A family. Exists as monomer or homodimer; disulfide-linked. Also exists as heterodimer with LCN2. Macrophages and transformed cell lines produce only the monomeric form. Interacts with ECM1. The cofactor is Zn(2+). It depends on Ca(2+) as a cofactor. N- and O-glycosylated.

Its subcellular location is the secreted. It localises to the extracellular space. The protein resides in the extracellular matrix. The catalysed reaction is Cleavage of gelatin types I and V and collagen types IV and V.. Its activity is regulated as follows. Inhibited by histatin-3 1/24 (histatin-5). Inhibited by ECM1. Matrix metalloproteinase that plays an essential role in local proteolysis of the extracellular matrix and in leukocyte migration. Could play a role in bone osteoclastic resorption. Cleaves KiSS1 at a Gly-|-Leu bond. Cleaves NINJ1 to generate the Secreted ninjurin-1 form. Cleaves type IV and type V collagen into large C-terminal three quarter fragments and shorter N-terminal one quarter fragments. Degrades fibronectin but not laminin or Pz-peptide. This is Matrix metalloproteinase-9 (Mmp9) from Mus musculus (Mouse).